The primary structure comprises 211 residues: Endo-1,4-beta-xylanase 3 (211 aa).

Positions 1–27 (MKVTAAFAGLLVTAFAAPVPEPVLVSR) are cleaved as a signal peptide. The GH11 domain occupies 28 to 210 (SAGINYVQNY…GAGSASVTIS (183 aa)). Glu106 serves as the catalytic Nucleophile. A disulfide bridge links Cys119 with Cys138. Glu197 functions as the Proton donor in the catalytic mechanism.

It belongs to the glycosyl hydrolase 11 (cellulase G) family.

It localises to the secreted. The enzyme catalyses Endohydrolysis of (1-&gt;4)-beta-D-xylosidic linkages in xylans.. The protein operates within glycan degradation; xylan degradation. In Aspergillus kawachii (strain NBRC 4308) (White koji mold), this protein is Endo-1,4-beta-xylanase 3 (xynC).